A 258-amino-acid polypeptide reads, in one-letter code: 5-oxoprolinase subunit A (258 aa).

It belongs to the LamB/PxpA family. As to quaternary structure, forms a complex composed of PxpA, PxpB and PxpC.

The enzyme catalyses 5-oxo-L-proline + ATP + 2 H2O = L-glutamate + ADP + phosphate + H(+). Functionally, catalyzes the cleavage of 5-oxoproline to form L-glutamate coupled to the hydrolysis of ATP to ADP and inorganic phosphate. The protein is 5-oxoprolinase subunit A of Corynebacterium jeikeium (strain K411).